The sequence spans 505 residues: ATP synthase subunit alpha (505 aa).

170–177 (GDRQTGKS) provides a ligand contact to ATP.

This sequence belongs to the ATPase alpha/beta chains family. As to quaternary structure, F-type ATPases have 2 components, CF(1) - the catalytic core - and CF(0) - the membrane proton channel. CF(1) has five subunits: alpha(3), beta(3), gamma(1), delta(1), epsilon(1). CF(0) has four main subunits: a(1), b(1), b'(1) and c(9-12).

The protein localises to the cellular thylakoid membrane. It carries out the reaction ATP + H2O + 4 H(+)(in) = ADP + phosphate + 5 H(+)(out). Its function is as follows. Produces ATP from ADP in the presence of a proton gradient across the membrane. The alpha chain is a regulatory subunit. The sequence is that of ATP synthase subunit alpha from Prochlorococcus marinus (strain MIT 9312).